Here is a 75-residue protein sequence, read N- to C-terminus: UPF0291 protein lin1342 (75 aa).

The disordered stretch occupies residues 55–75 (IDPKGNDVTPHKIKQMRKNKK). Positions 65–75 (HKIKQMRKNKK) are enriched in basic residues.

Belongs to the UPF0291 family.

It is found in the cytoplasm. This is UPF0291 protein lin1342 from Listeria innocua serovar 6a (strain ATCC BAA-680 / CLIP 11262).